The following is an 8799-amino-acid chain: Nesprin-1 (8799 aa).

The interval 1-289 is actin-binding; it reads MATSRASSRS…TQYPDIHGAG (289 aa). Topologically, residues 1–8748 are cytoplasmic; sequence MATSRASSRS…GRAFLFRILR (8748 aa). Calponin-homology (CH) domains are found at residues 27-134 and 178-283; these read IVQK…LYFQ and GNAK…TQYP. 52 Spectrin repeats span residues 314-397, 398-502, 503-609, 610-703, 704-815, 816-923, 924-1024, 1025-1122, 1123-1246, 1247-1333, 1334-1442, 1443-1548, 1549-1651, 1652-1761, 1762-1877, 1878-1974, 1975-2079, 2080-2193, 2194-2301, 2302-2399, 2400-2511, 2512-2617, 2618-2729, 2730-2836, 2837-2960, 2961-3060, 3061-3169, 3170-3273, 3274-3385, 3386-3488, 3489-3591, 3592-3718, 3719-3812, 3813-3918, 3919-4026, 4027-4137, 4138-4233, 4234-4337, 4338-4449, 4450-4558, 4559-4667, 4668-4774, 4775-4880, 4881-4989, 4990-5097, 5098-5207, 5208-5316, 5317-5422, 5423-5520, 5521-5628, 5629-5745, and 5746-5851; these read RDDR…SRLF, DWHI…HLMK, MEFL…SMLE, EVIS…YARA, DEMD…QLTV, PLEE…KHVE, ANSR…HLKI, AVEK…LVDD, PDKW…SSLE, GLIS…ERRI, QVSL…MEMV, KSKW…ILGH, LSQQ…LEDL, LARW…LQSV, LAEH…SHAC, MSTL…ADAL, VALK…QGQC, CGLI…LRVS, LSIW…KDFT, AQRT…QTQA, RIQD…LQDC, VSEL…LRSC, QLAL…LESV, IDQW…VEDL, VKDH…FGQV, TQLE…QNKE, QILQ…LENL, KIQM…VSRL, DRII…LEGA, LSKW…LEKL, VRLH…RMQL, NNVV…YSDW, YGST…LEKG, LHLA…LEAK, VKDH…QRVY, RSLE…KSLK, AELW…REQD, LQRT…IQVS, VTNL…LNKA, LSEK…LEKS, LVSR…TQEA, ILAR…LEDT, TSVY…CESR, MVQS…LTEI, YSRC…LQRC, MVQW…LEDA, VDEW…GKLV, KQEL…EEGK, AMSQ…LSKL, NQAL…LQDA, AKDM…PKEA, and VVQY…PSAH. A coiled-coil region spans residues 314–8666; the sequence is RDDRLILKET…DLEKLLDMSS (8353 aa). Lys-377 bears the Phosphoserine mark. The residue at position 732 (Ser-732) is a Phosphoserine. A disordered region spans residues 1288–1310; it reads KKRDLQEQMEQAQQGGQAGPGQE. Phosphothreonine is present on Thr-2268. Ser-5655 carries the post-translational modification Phosphoserine. Positions 5868–5894 are disordered; sequence PVTEESGEEGTNSEISSPPACRSPSPV. Spectrin repeat units follow at residues 5971–6080, 6081–6187, 6377–6488, 6489–6584, 6585–6694, 6695–6798, 6799–6905, 6906–7023, 7024–7131, 7132–7240, 7241–7353, 7354–7457, 7458–7561, 7562–7674, 7675–7786, 7787–7886, 7887–8000, 8001–8109, and 8110–8221; these read LERQ…LEEK, LSDQ…SLGE, RQSI…RLQQ, ILRF…RSSL, HQNL…LEMW, SHLD…TILK, HWTR…QEKL, HQLQ…LEGL, LESW…LTSA, LGQW…SKAL, LQLW…LQAG, VVDY…LQSF, LLQH…RGII, DSQI…LAFL, LKDW…NEWA, VFSE…LKET, LVAV…IEET, WRLW…LKHF, and ISQR…VRLP. Phosphoserine occurs at positions 8225 and 8227. Positions 8237–8287 are disordered; the sequence is TALSDLRWQDPSADGMPSPQPSSNPSLSLPQPLRSERSGRDTPASVDSIPL. Low complexity predominate over residues 8257 to 8269; sequence PSSNPSLSLPQPL. Thr-8278 carries the post-translational modification Phosphothreonine. Residues Ser-8281, Ser-8284, and Ser-8308 each carry the phosphoserine modification. 3 Spectrin repeats span residues 8332–8440, 8441–8550, and 8551–8668; these read SSLE…MKQN, LQKW…LQDA, and LMQC…SSSQ. Thr-8363 is modified (phosphothreonine). The interval 8673–8735 is disordered; that stretch reads SWSSADELDT…SDSSRSDPRP (63 aa). Composition is skewed to polar residues over residues 8682-8698 and 8706-8718; these read TSGS…PNRQ and SLSQ…SSPK. Over residues 8721-8735 the composition is skewed to basic and acidic residues; sequence STRDGSDSSRSDPRP. The KASH domain maps to 8740–8799; it reads RAFLFRILRAALPFQLLLLLLIGLTCLVPMSEKDYSCALSNNFARSFHPMLRYTNGPPPL. A helical; Anchor for type IV membrane protein membrane pass occupies residues 8749-8769; that stretch reads AALPFQLLLLLLIGLTCLVPM. The Perinuclear space segment spans residues 8770-8799; that stretch reads SEKDYSCALSNNFARSFHPMLRYTNGPPPL.

It belongs to the nesprin family. As to quaternary structure, core component of LINC complexes which are composed of inner nuclear membrane SUN domain-containing proteins coupled to outer nuclear membrane KASH domain-containing nesprins. SUN and KASH domain-containing proteins seem to bind each other promiscuously; however, differentially expression of LINC complex constituents can give rise to specific assemblies. At least SUN1/2-containing core LINC complexes are proposed to be hexameric composed of three protomers of each KASH and SUN domain-containing protein. The SUN2:SYNE1/KASH1 LINC complex is a heterohexamer; the homotrimeric cloverleave-like conformation of the SUN domain is a prerequisite for LINC complex formation in which three separate SYNE1/KASH1 peptides bind at the interface of adjacent SUN domains. Self-associates. Interacts with SYNE3. Interacts with SUN3; proposed to form a spermatogenesis-specific LINC complex with SUN3 during sperm head formation. May interact with MUSK. Interacts with SPAG4/SUN4. Interacts with EMD and LMNA in vitro. Interacts with F-actin via its N-terminal domain. Interacts with DCTN1 and DYNC1I1/2; suggesting the association with the dynein-dynactin motor complex. Interacts (via KASH domain) with TMEM258. In terms of processing, the disulfid bond with SUN1 or SUN2 is required for stability of the respective LINC complex under tensile forces. In terms of tissue distribution, expressed in C2F3 and CH310T1/2 cells, brain and skeletal muscle (at protein level).

It is found in the nucleus outer membrane. The protein localises to the nucleus. Its subcellular location is the nucleus envelope. It localises to the cytoplasm. The protein resides in the cytoskeleton. It is found in the myofibril. The protein localises to the sarcomere. In terms of biological role, multi-isomeric modular protein which forms a linking network between organelles and the actin cytoskeleton to maintain the subcellular spatial organization. As a component of the LINC (LInker of Nucleoskeleton and Cytoskeleton) complex involved in the connection between the nuclear lamina and the cytoskeleton. The nucleocytoplasmic interactions established by the LINC complex play an important role in the transmission of mechanical forces across the nuclear envelope and in nuclear movement and positioning. May be involved in nucleus-centrosome attachment. During interkinetic nuclear migration (INM) at G2 phase and nuclear migration in neural progenitors its LINC complex association with SUN1/2 and probably association with cytoplasmic dynein-dynactin motor complexes functions to pull the nucleus toward the centrosome; SYNE1 and SYNE2 seem to act redundantly in cerebellum, midbrain, brain stem, and other brain regions except cerebral cortex and hippocampus. Required for centrosome migration to the apical cell surface during early ciliogenesis. May be involved in nuclear remodeling during sperm head formation in spermatogenesis; a probable SUN3:SYNE1/KASH1 LINC complex may tether spermatid nuclei to posterior cytoskeletal structures such as the manchette. The protein is Nesprin-1 of Mus musculus (Mouse).